The sequence spans 98 residues: Mu-type opioid receptor (98 aa).

At 1–9 the chain is on the cytoplasmic side; the sequence is YTKMKTATN. The chain crosses the membrane as a helical span at residues 10–34; the sequence is IYIFNLALADALATSTLPFQSVNYL. Over 35-45 the chain is Extracellular; that stretch reads MGTWPFGTILC. Residues 46-68 form a helical membrane-spanning segment; the sequence is KIVISIDYYNMFTSIFTLCTMSV. The Cytoplasmic portion of the chain corresponds to 69–88; that stretch reads DRYIAVCHPVKALDFRTPRN. At tyrosine 71 the chain carries Phosphotyrosine. A helical transmembrane segment spans residues 89 to 98; the sequence is AKTVNVCNWI.

It belongs to the G-protein coupled receptor 1 family. Forms homooligomers and heterooligomers with other GPCRs, such as OPRD1, OPRK1, OPRL1, NPFFR2, ADRA2A, SSTR2, CNR1 and CCR5 (probably in dimeric forms). Interacts with heterotrimeric G proteins; interaction with a heterotrimeric complex containing GNAI1, GNB1 and GNG2 stabilizes the active conformation of the receptor and increases its affinity for endomorphin-2, the synthetic opioid peptide DAMGO and for morphinan agonists. Interacts with PPL; the interaction disrupts agonist-mediated G-protein activation. Interacts (via C-terminus) with DNAJB4 (via C-terminus). Interacts with calmodulin; the interaction inhibits the constitutive activity of OPRM1; it abolishes basal and attenuates agonist-stimulated G-protein coupling. Interacts with FLNA, PLD2, RANBP9 and WLS and GPM6A. Interacts with RTP4. Interacts with SYP and GNAS. Interacts with RGS9, RGS17, RGS20, RGS4, PPP1R9B and HINT1. Post-translationally, phosphorylated. Differentially phosphorylated in basal and agonist-induced conditions. Agonist-mediated phosphorylation modulates receptor internalization. Phosphorylated by GRK2 in a agonist-dependent manner. Phosphorylated on tyrosine residues; the phosphorylation is involved in agonist-induced G-protein-independent receptor down-regulation. Phosphorylated. Differentially phosphorylated in basal and agonist-induced conditions. Agonist-mediated phosphorylation modulates receptor internalization. Phosphorylated by GRK2 in a agonist-dependent manner. Phosphorylated on tyrosine residues; the phosphorylation is involved in agonist-induced G-protein-independent receptor down-regulation. In terms of processing, ubiquitinated. A basal ubiquitination seems not to be related to degradation. Ubiquitination is increased upon formation of OPRM1:OPRD1 oligomers leading to proteasomal degradation; the ubiquitination is diminished by RTP4.

Its subcellular location is the cell membrane. The protein resides in the cell projection. The protein localises to the axon. It localises to the perikaryon. It is found in the dendrite. Its subcellular location is the endosome. Functionally, receptor for endogenous opioids such as beta-endorphin and endomorphin. Receptor for natural and synthetic opioids including morphine, heroin, DAMGO, fentanyl, etorphine, buprenorphin and methadone. Also activated by enkephalin peptides, such as Met-enkephalin or Met-enkephalin-Arg-Phe, with higher affinity for Met-enkephalin-Arg-Phe. Agonist binding to the receptor induces coupling to an inactive GDP-bound heterotrimeric G-protein complex and subsequent exchange of GDP for GTP in the G-protein alpha subunit leading to dissociation of the G-protein complex with the free GTP-bound G-protein alpha and the G-protein beta-gamma dimer activating downstream cellular effectors. The agonist- and cell type-specific activity is predominantly coupled to pertussis toxin-sensitive G(i) and G(o) G alpha proteins, GNAI1, GNAI2, GNAI3 and GNAO1, and to a lesser extent to pertussis toxin-insensitive G alpha proteins GNAZ and GNA15. They mediate an array of downstream cellular responses, including inhibition of adenylate cyclase activity and both N-type and L-type calcium channels, activation of inward rectifying potassium channels, mitogen-activated protein kinase (MAPK), phospholipase C (PLC), phosphoinositide/protein kinase (PKC), phosphoinositide 3-kinase (PI3K) and regulation of NF-kappa-B. Also couples to adenylate cyclase stimulatory G alpha proteins. The selective temporal coupling to G-proteins and subsequent signaling can be regulated by RGSZ proteins, such as RGS9, RGS17 and RGS4. Phosphorylation by members of the GPRK subfamily of Ser/Thr protein kinases and association with beta-arrestins is involved in short-term receptor desensitization. Beta-arrestins associate with the GPRK-phosphorylated receptor and uncouple it from the G-protein thus terminating signal transduction. The phosphorylated receptor is internalized through endocytosis via clathrin-coated pits which involves beta-arrestins. The activation of the ERK pathway occurs either in a G-protein-dependent or a beta-arrestin-dependent manner and is regulated by agonist-specific receptor phosphorylation. Acts as a class A G-protein coupled receptor (GPCR) which dissociates from beta-arrestin at or near the plasma membrane and undergoes rapid recycling. Receptor down-regulation pathways are varying with the agonist and occur dependent or independent of G-protein coupling. Endogenous ligands induce rapid desensitization, endocytosis and recycling. Heterooligomerization with other GPCRs can modulate agonist binding, signaling and trafficking properties. Involved in neurogenesis. The protein is Mu-type opioid receptor (OPRM1) of Cavia porcellus (Guinea pig).